A 539-amino-acid polypeptide reads, in one-letter code: uncharacterized protein (539 aa).

Disordered regions lie at residues 179 to 203 (SDEL…HSHG) and 433 to 459 (AQAS…HRDE). Acidic residues predominate over residues 182-192 (LLPDTGEDSDE). Over residues 433 to 442 (AQASARAQAR) the composition is skewed to low complexity. The segment covering 443–455 (AARRGRSAAKARG) has biased composition (basic residues).

It belongs to the mycobacterial PPE family.

The protein localises to the secreted. This is an uncharacterized protein from Mycobacterium tuberculosis (strain CDC 1551 / Oshkosh).